Reading from the N-terminus, the 1273-residue chain is Homeobox protein cut-like ceh-44 (1273 aa).

Coiled coils occupy residues 101-407 and 440-468; these read LLKG…DGFK and RQKNTDSELIEKIQEAKRNKAVCELKFED. 3 consecutive DNA-binding regions (CUT) follow at residues 591–681, 832–919, and 978–1065; these read NVQA…LSPR, QAQY…KQPK, and IDES…KEES. Positions 1069–1100 are disordered; it reads VKAKIESVPAPREAPRPVKRKHSSDTDDYDLN. Positions 1103–1162 form a DNA-binding region, homeobox; it reads KPIQRTVITDYQKDTLRFVFVNEQHPSNELCEQISLKLDMSLRTVQNWFHNHRTRSKARE.

Belongs to the CUT homeobox family.

The protein resides in the nucleus. Functionally, probable DNA-binding regulatory protein involved in cell-fate specification. This is Homeobox protein cut-like ceh-44 from Caenorhabditis elegans.